The primary structure comprises 187 residues: Large ribosomal subunit protein uL24c (187 aa).

The N-terminal 41 residues, 1-41 (MAALQSSFAGLSTSFFGQRFSPPLSLPPLVKSTEGPCLIQA), are a transit peptide targeting the chloroplast.

The protein belongs to the universal ribosomal protein uL24 family. In terms of assembly, part of the 50S ribosomal subunit.

The protein resides in the plastid. It is found in the chloroplast. In terms of biological role, one of two assembly initiator proteins, it binds directly to the 5'-end of the 23S rRNA, where it nucleates assembly of the 50S subunit. This is Large ribosomal subunit protein uL24c (RPL24) from Nicotiana tabacum (Common tobacco).